A 65-amino-acid polypeptide reads, in one-letter code: Conotoxin Lp5.1 (65 aa).

A signal peptide spans 1-22 (MRCVPVFIILLLLIPSAPSVDA). The propeptide occupies 23–50 (QRKTKDDVPLASFHDNAKRTLKRLWNKR).

This sequence belongs to the conotoxin T superfamily. Post-translationally, contains 2 disulfide bonds that can be either 'C1-C3, C2-C4' or 'C1-C4, C2-C3', since these disulfide connectivities have been observed for conotoxins with cysteine framework V (for examples, see AC P0DQQ7 and AC P81755). Expressed by the venom duct.

It localises to the secreted. The chain is Conotoxin Lp5.1 from Conus leopardus (Leopard cone).